An 867-amino-acid chain; its full sequence is Schizokinen transporter SchT (867 aa).

The tract at residues 40 to 62 (HPGKTQEAPSPTQLNTQSPAPNA) is disordered. The segment covering 46–62 (EAPSPTQLNTQSPAPNA) has biased composition (polar residues). Positions 185 to 192 (IELVVTAT) match the TonB box motif. In terms of domain architecture, TBDR plug spans 197 to 307 (PIQNVPRSIT…TGGVINIITR (111 aa)). Residues 313–867 (KLTSRTEVGV…TLSIKYSFDW (555 aa)) enclose the TBDR beta-barrel domain. A TonB C-terminal box motif is present at residues 850–867 (AYAAARGRTLSIKYSFDW).

It belongs to the TonB-dependent receptor family.

Its subcellular location is the cell outer membrane. Its function is as follows. Involved in the TonB-dependent uptake of iron in complex with schizokinen, a dihydroxamate-type siderophore. This is Schizokinen transporter SchT from Nostoc sp. (strain PCC 7120 / SAG 25.82 / UTEX 2576).